The chain runs to 264 residues: Thymidylate synthase (264 aa).

Position 21 (R21) interacts with dUMP. H51 lines the (6R)-5,10-methylene-5,6,7,8-tetrahydrofolate pocket. A dUMP-binding site is contributed by 126–127 (RR). C146 functions as the Nucleophile in the catalytic mechanism. Residues 166-169 (RSCD), N177, and 207-209 (HLY) each bind dUMP. D169 contacts (6R)-5,10-methylene-5,6,7,8-tetrahydrofolate. Residue S263 coordinates (6R)-5,10-methylene-5,6,7,8-tetrahydrofolate.

Belongs to the thymidylate synthase family. Bacterial-type ThyA subfamily. Homodimer.

The protein resides in the cytoplasm. It carries out the reaction dUMP + (6R)-5,10-methylene-5,6,7,8-tetrahydrofolate = 7,8-dihydrofolate + dTMP. Its pathway is pyrimidine metabolism; dTTP biosynthesis. Functionally, catalyzes the reductive methylation of 2'-deoxyuridine-5'-monophosphate (dUMP) to 2'-deoxythymidine-5'-monophosphate (dTMP) while utilizing 5,10-methylenetetrahydrofolate (mTHF) as the methyl donor and reductant in the reaction, yielding dihydrofolate (DHF) as a by-product. This enzymatic reaction provides an intracellular de novo source of dTMP, an essential precursor for DNA biosynthesis. This is Thymidylate synthase from Buchnera aphidicola subsp. Acyrthosiphon pisum (strain 5A).